Reading from the N-terminus, the 201-residue chain is Ras-related protein Rab-1B (201 aa).

Methionine 1 is modified (N-acetylmethionine). Serine 17, glycine 18, valine 19, glycine 20, lysine 21, serine 22, cysteine 23, tyrosine 33, threonine 34, glutamate 35, serine 36, serine 39, and threonine 40 together coordinate GTP. Serine 22 provides a ligand contact to Mg(2+). The Switch 1 signature appears at 30–45 (DDTYTESYISTIGVDF). 2 residues coordinate Mg(2+): threonine 40 and aspartate 63. Residues 64–83 (TAGQERFRTITSSYYRGAHG) form a switch 2 region; Required for interaction with REP1/CHM region. Positions 65–80 (AGQERFRTITSSYYRG) match the Switch 2 motif. GTP contacts are provided by glycine 66, asparagine 121, lysine 122, aspartate 124, serine 151, alanine 152, and lysine 153. Residues 173–201 (MGPGAASGGERPNLKIDSTPVKQAGGGCC) are disordered. Residues cysteine 200 and cysteine 201 are each lipidated (S-geranylgeranyl cysteine). Cysteine 201 bears the Cysteine methyl ester mark.

This sequence belongs to the small GTPase superfamily. Rab family. Interacts with MICAL1 and MICAL2. Interacts (in GTP-bound form) with MICALCL, MICAL1 and MILCAL3. Interacts with GDI1; the interaction requires the GDP-bound state. Interacts with CHM/REP1; the interaction requires the GDP-bound form and is necessary for prenylation by GGTase II. Interacts with RabGAP TBC1D20. Interacts (in GDP-bound form) with lipid phosphatase MTMR6 (via GRAM domain); the interaction regulates MTMR6 recruitment to the endoplasmic reticulum-Golgi intermediate compartment. Interacts (in GDP-bound form) with lipid phosphatase MTMR7. Mg(2+) is required as a cofactor. Prenylated; by GGTase II, only after interaction of the substrate with Rab escort protein 1 (REP1).

It is found in the cytoplasm. The protein localises to the membrane. Its subcellular location is the preautophagosomal structure membrane. It localises to the perinuclear region. The enzyme catalyses GTP + H2O = GDP + phosphate + H(+). Regulated by guanine nucleotide exchange factors (GEFs) which promote the exchange of bound GDP for free GTP. Regulated by GTPase activating proteins (GAPs) including TBC1D20 which increases the GTP hydrolysis activity. Inhibited by GDP dissociation inhibitors (GDIs). Functionally, the small GTPases Rab are key regulators of intracellular membrane trafficking, from the formation of transport vesicles to their fusion with membranes. Rabs cycle between an inactive GDP-bound form and an active GTP-bound form that is able to recruit to membranes different set of downstream effectors directly responsible for vesicle formation, movement, tethering and fusion. Plays a role in the initial events of the autophagic vacuole development which take place at specialized regions of the endoplasmic reticulum. Regulates vesicular transport between the endoplasmic reticulum and successive Golgi compartments. Required to modulate the compacted morphology of the Golgi. Promotes the recruitment of lipid phosphatase MTMR6 to the endoplasmic reticulum-Golgi intermediate compartment. This is Ras-related protein Rab-1B (RAB1B) from Bos taurus (Bovine).